Consider the following 113-residue polypeptide: Hydrogenase maturation factor HybF (113 aa).

Positions 2 and 3 each coordinate Ni(2+). 4 residues coordinate Zn(2+): cysteine 73, cysteine 76, cysteine 89, and cysteine 92.

The protein belongs to the HypA/HybF family. HybF subfamily.

Functionally, involved in the maturation of [NiFe] hydrogenases. Required for nickel insertion into the metal center of the hydrogenase. The protein is Hydrogenase maturation factor HybF of Proteus vulgaris.